The sequence spans 702 residues: Polynucleotide 5'-hydroxyl-kinase NOL9 (702 aa).

Alanine 2 carries the N-acetylalanine modification. Residues 31–47 (RRPRRRLGSLRWCGRRR) carry the Nucleolar localization signal motif. Residues 69-101 (VSRAAAARRPNTATPSPIPSPTPASEPESEPEL) form a disordered region. Over residues 71-83 (RAAAARRPNTATP) the composition is skewed to low complexity. An ATP-binding site is contributed by 306–313 (GSQDVGKS). The segment at 480–702 (FADEEKESPV…RRPKFCRKMK (223 aa)) is interaction with LAS1L. A Glycyl lysine isopeptide (Lys-Gly) (interchain with G-Cter in SUMO2) cross-link involves residue lysine 485. Serine 487 is modified (phosphoserine). Residues 680-689 (AREPEEAHKE) are compositionally biased toward basic and acidic residues. Residues 680-702 (AREPEEAHKEKPYRRPKFCRKMK) form a disordered region. Basic residues predominate over residues 690–702 (KPYRRPKFCRKMK).

The protein belongs to the Clp1 family. NOL9/GRC3 subfamily. In terms of assembly, interacts with PELP1, WDR18 and SENP3. Interacts with LAS1L to form an ITS2 pre-rRNA endonuclease-kinase complex.

The protein resides in the nucleus. It localises to the nucleolus. It catalyses the reaction a 5'-end dephospho-2'-deoxyribonucleoside-DNA + ATP = a 5'-end 5'-phospho-2'-deoxyribonucleoside-DNA + ADP + H(+). It carries out the reaction a 5'-end dephospho-ribonucleoside-RNA + ATP = a 5'-end 5'-phospho-ribonucleoside-RNA + ADP + H(+). Its function is as follows. Polynucleotide kinase that can phosphorylate the 5'-hydroxyl groups of single-stranded and double-stranded RNA and DNA substrates. Involved in rRNA processing and its kinase activity is required for the processing of the 32S precursor into 5.8S and 28S rRNAs, more specifically for the generation of the major 5.8S(S) form. Required for the efficient pre-rRNA processing of internal transcribed spacer 2 (ITS2). Associates with LAS1L to form an ITS2 pre-rRNA endonuclease-kinase complex and is responsible for the transport of this complex into the nucleolus. The protein is Polynucleotide 5'-hydroxyl-kinase NOL9 (NOL9) of Homo sapiens (Human).